Consider the following 301-residue polypeptide: NADH-cytochrome b5 reductase 3 (301 aa).

A lipid anchor (N-myristoyl glycine) is attached at glycine 2. An FAD-binding FR-type domain is found at 40–152 (DIKYPLRLID…RGPNGLLVYQ (113 aa)). Lysine 42 carries the post-translational modification N6-acetyllysine. Residue tyrosine 43 is modified to Phosphotyrosine. Lysine 50 is subject to N6-acetyllysine. Arginine 92, proline 93, tyrosine 94, valine 109, lysine 111, and phenylalanine 114 together coordinate FAD. Lysine 120 is modified (N6-acetyllysine). Positions 126, 127, 128, and 185 each coordinate FAD.

The protein belongs to the flavoprotein pyridine nucleotide cytochrome reductase family. Component of a complex composed of cytochrome b5, NADH-cytochrome b5 reductase (CYB5R3) and MTARC2. Interacts with MTLN; the interaction is required to maintain cellular lipid composition and leads to stimulation of mitochondrial respiratory complex I activity. Requires FAD as cofactor.

It is found in the endoplasmic reticulum membrane. It localises to the mitochondrion outer membrane. The enzyme catalyses 2 Fe(III)-[cytochrome b5] + NADH = 2 Fe(II)-[cytochrome b5] + NAD(+) + H(+). In terms of biological role, catalyzes the reduction of two molecules of cytochrome b5 using NADH as the electron donor. The protein is NADH-cytochrome b5 reductase 3 of Mus musculus (Mouse).